A 453-amino-acid polypeptide reads, in one-letter code: Cholesterol 7-desaturase nvd (453 aa).

A helical transmembrane segment spans residues 53–73; the sequence is IVEYILILTLMFAFSAILYVI. Residues 126–229 enclose the Rieske domain; the sequence is WFAVAETREL…VVETDGAIWI (104 aa). 4 residues coordinate [2Fe-2S] cluster: cysteine 167, histidine 169, cysteine 187, and histidine 190.

It belongs to the cholesterol 7-desaturase family. The cofactor is [2Fe-2S] cluster.

The protein localises to the membrane. The catalysed reaction is cholesterol + NADPH + O2 + H(+) = 7-dehydrocholesterol + NADP(+) + 2 H2O. It carries out the reaction cholesterol + NADH + O2 + H(+) = 7-dehydrocholesterol + NAD(+) + 2 H2O. Its pathway is steroid hormone biosynthesis; dafachronic acid biosynthesis. Its function is as follows. Catalyzes the production of 7-dehydrocholesterol (7-DHC or cholesta-5,7-dien-3beta-ol) by inserting a double bond (desaturating) at the C7-C8 single bond of cholesterol. Essential regulator of steroid biosynthesis as this reaction is the first step in the synthesis of the steroid hormone Delta(7)-dafachronic acid. This chain is Cholesterol 7-desaturase nvd, found in Bombyx mori (Silk moth).